Here is a 373-residue protein sequence, read N- to C-terminus: Histidinol-phosphate aminotransferase (373 aa).

Residues 1–10 (MTGVPGSSIT) are compositionally biased toward polar residues. Residues 1-45 (MTGVPGSSITLDDLPLRDDLRGKSPYGAPQLSVPVRLNTNENPHP) are disordered. Lys237 carries the post-translational modification N6-(pyridoxal phosphate)lysine.

The protein belongs to the class-II pyridoxal-phosphate-dependent aminotransferase family. Histidinol-phosphate aminotransferase subfamily. Homodimer. Pyridoxal 5'-phosphate serves as cofactor.

The catalysed reaction is L-histidinol phosphate + 2-oxoglutarate = 3-(imidazol-4-yl)-2-oxopropyl phosphate + L-glutamate. Its pathway is amino-acid biosynthesis; L-histidine biosynthesis; L-histidine from 5-phospho-alpha-D-ribose 1-diphosphate: step 7/9. This Mycolicibacterium vanbaalenii (strain DSM 7251 / JCM 13017 / BCRC 16820 / KCTC 9966 / NRRL B-24157 / PYR-1) (Mycobacterium vanbaalenii) protein is Histidinol-phosphate aminotransferase.